Reading from the N-terminus, the 492-residue chain is Mitochondrial distribution and morphology protein 12 (492 aa).

The region spanning 1–492 (MSIDLNWETV…VYPSFWTFLV (492 aa)) is the SMP-LTD domain. Disordered stretches follow at residues 68 to 158 (DFYE…STPG), 199 to 301 (LEGH…GHPR), and 379 to 434 (AVGG…GSGN). Over residues 78–90 (VASDDSEGEEDAV) the composition is skewed to acidic residues. Gly residues predominate over residues 130-139 (SPGGPGGPGM). Residues 246 to 257 (LNPNSLAPPSSS) show a composition bias toward low complexity. Residues 270–285 (TTPAPGSATALSGSNE) are compositionally biased toward polar residues. Positions 387-400 (GLSSPGEGPSQAQG) are enriched in low complexity. Residues 401 to 415 (QGQGQGQGQGQGQTP) are compositionally biased toward gly residues. The segment covering 416–428 (GAGQQKQQKKQAG) has biased composition (low complexity).

It belongs to the MDM12 family. As to quaternary structure, component of the ER-mitochondria encounter structure (ERMES) or MDM complex, composed of MMM1, MDM10, MDM12 and MDM34. An MMM1 homodimer associates with one molecule of MDM12 on each side in a pairwise head-to-tail manner, and the SMP-LTD domains of MMM1 and MDM12 generate a continuous hydrophobic tunnel for phospholipid trafficking.

It localises to the mitochondrion outer membrane. The protein localises to the endoplasmic reticulum membrane. Component of the ERMES/MDM complex, which serves as a molecular tether to connect the endoplasmic reticulum (ER) and mitochondria. Components of this complex are involved in the control of mitochondrial shape and protein biogenesis, and function in nonvesicular lipid trafficking between the ER and mitochondria. MDM12 is required for the interaction of the ER-resident membrane protein MMM1 and the outer mitochondrial membrane-resident beta-barrel protein MDM10. The MDM12-MMM1 subcomplex functions in the major beta-barrel assembly pathway that is responsible for biogenesis of all mitochondrial outer membrane beta-barrel proteins, and acts in a late step after the SAM complex. The MDM10-MDM12-MMM1 subcomplex further acts in the TOM40-specific pathway after the action of the MDM12-MMM1 complex. Essential for establishing and maintaining the structure of mitochondria and maintenance of mtDNA nucleoids. The protein is Mitochondrial distribution and morphology protein 12 of Chaetomium globosum (strain ATCC 6205 / CBS 148.51 / DSM 1962 / NBRC 6347 / NRRL 1970) (Soil fungus).